A 274-amino-acid chain; its full sequence is Mitochondrial outer membrane protein porin 3 (274 aa).

At S76 the chain carries Phosphoserine.

It belongs to the eukaryotic mitochondrial porin (TC 1.B.8.1) family. Interacts with KIN14F/KP1. Interacts with FBA6 and GAPC1. Expressed in leaf tips, anthers and stigma.

It is found in the cell membrane. The protein resides in the mitochondrion outer membrane. Forms a channel through the mitochondrial outer membrane that allows diffusion of small hydrophilic molecules. The channel adopts an open conformation at low or zero membrane potential and a closed conformation at potentials above 30-40 mV. The open state has a weak anion selectivity whereas the closed state is cation-selective. The protein is Mitochondrial outer membrane protein porin 3 (VDAC3) of Arabidopsis thaliana (Mouse-ear cress).